Here is a 545-residue protein sequence, read N- to C-terminus: Chaperonin GroEL (545 aa).

Residues 29–32 (TLGP), lysine 50, 86–90 (DGTTT), glycine 415, and aspartate 495 each bind ATP.

This sequence belongs to the chaperonin (HSP60) family. Forms a cylinder of 14 subunits composed of two heptameric rings stacked back-to-back. Interacts with the co-chaperonin GroES.

Its subcellular location is the cytoplasm. It catalyses the reaction ATP + H2O + a folded polypeptide = ADP + phosphate + an unfolded polypeptide.. Together with its co-chaperonin GroES, plays an essential role in assisting protein folding. The GroEL-GroES system forms a nano-cage that allows encapsulation of the non-native substrate proteins and provides a physical environment optimized to promote and accelerate protein folding. In Porphyromonas gingivalis (strain ATCC BAA-308 / W83), this protein is Chaperonin GroEL.